Reading from the N-terminus, the 284-residue chain is 16S rRNA (guanine(1405)-N(7))-methyltransferase (284 aa).

Residues Y73, 111–113, R117, A142, D165, 191–192, L208, and Q217 each bind S-adenosyl-L-methionine; these read HAS and DL.

This sequence belongs to the methyltransferase superfamily. Aminoglycoside resistance family.

It carries out the reaction guanosine(1405) in 16S rRNA + S-adenosyl-L-methionine = N(7)-methylguanosine(1405) in 16S rRNA + S-adenosyl-L-homocysteine. Its function is as follows. Specifically methylates the N(7) position of guanine 1405 in 16S rRNA. Confers resistance to various aminoglycosides, including gentamicin and kanamycin. The polypeptide is 16S rRNA (guanine(1405)-N(7))-methyltransferase (Krm) (Frankia casuarinae (strain DSM 45818 / CECT 9043 / HFP020203 / CcI3)).